The sequence spans 119 residues: Small ribosomal subunit protein uS10 (119 aa).

The residue at position 2 (Ala2) is an N-acetylalanine. Lys4 is covalently cross-linked (Glycyl lysine isopeptide (Lys-Gly) (interchain with G-Cter in ubiquitin)). Lys8 bears the N6-succinyllysine; alternate mark. Lys8 participates in a covalent cross-link: Glycyl lysine isopeptide (Lys-Gly) (interchain with G-Cter in ubiquitin); alternate. Thr9 is modified (phosphothreonine). Lys34 and Lys75 each carry N6-acetyllysine. Ser93 is subject to Phosphoserine.

It belongs to the universal ribosomal protein uS10 family. In terms of assembly, component of the 40S small ribosomal subunit. In terms of processing, polyubiquitinated by ZNF598 via 'Lys-63'-linked ubiquitin chains when a ribosome has stalled, initiating the ribosome quality control (RQC) pathway to degrade the potentially detrimental aberrant nascent polypeptide. Deubiquitinated by OTUD3 and USP21, antagonizing ZNF598 activity. Ufmylated by UFL1.

The protein localises to the cytoplasm. In terms of biological role, component of the small ribosomal subunit. The ribosome is a large ribonucleoprotein complex responsible for the synthesis of proteins in the cell. This chain is Small ribosomal subunit protein uS10 (Rps20), found in Rattus norvegicus (Rat).